The chain runs to 357 residues: Peptide chain release factor 1 (357 aa).

Gln-233 is modified (N5-methylglutamine).

It belongs to the prokaryotic/mitochondrial release factor family. In terms of processing, methylated by PrmC. Methylation increases the termination efficiency of RF1.

The protein resides in the cytoplasm. Functionally, peptide chain release factor 1 directs the termination of translation in response to the peptide chain termination codons UAG and UAA. The protein is Peptide chain release factor 1 of Flavobacterium psychrophilum (strain ATCC 49511 / DSM 21280 / CIP 103535 / JIP02/86).